The following is a 585-amino-acid chain: ATP-dependent lipid A-core flippase (585 aa).

6 helical membrane passes run leucine 18 to leucine 38, leucine 68 to serine 88, serine 142 to methionine 162, isoleucine 163 to leucine 183, proline 255 to proline 275, and isoleucine 277 to methionine 297. Positions isoleucine 30–arginine 313 constitute an ABC transmembrane type-1 domain. The ABC transporter domain maps to valine 345–methionine 581. ATP is bound at residue glycine 379–serine 386.

It belongs to the ABC transporter superfamily. Lipid exporter (TC 3.A.1.106) family. Homodimer.

The protein resides in the cell inner membrane. The enzyme catalyses ATP + H2O + lipid A-core oligosaccharideSide 1 = ADP + phosphate + lipid A-core oligosaccharideSide 2.. Functionally, involved in lipopolysaccharide (LPS) biosynthesis. Translocates lipid A-core from the inner to the outer leaflet of the inner membrane. Transmembrane domains (TMD) form a pore in the inner membrane and the ATP-binding domain (NBD) is responsible for energy generation. This Mannheimia succiniciproducens (strain KCTC 0769BP / MBEL55E) protein is ATP-dependent lipid A-core flippase.